Consider the following 635-residue polypeptide: Probable Xaa-Pro aminopeptidase P (635 aa).

Mn(2+)-binding residues include aspartate 432, aspartate 443, glutamate 541, and glutamate 555.

Belongs to the peptidase M24B family. The cofactor is Mn(2+).

The enzyme catalyses Release of any N-terminal amino acid, including proline, that is linked to proline, even from a dipeptide or tripeptide.. In terms of biological role, catalyzes the removal of a penultimate prolyl residue from the N-termini of peptides. This chain is Probable Xaa-Pro aminopeptidase P (AMPP), found in Arthroderma gypseum (strain ATCC MYA-4604 / CBS 118893) (Microsporum gypseum).